The following is a 185-amino-acid chain: Large ribosomal subunit protein uL5 (185 aa).

The protein belongs to the universal ribosomal protein uL5 family. Part of the 50S ribosomal subunit; part of the 5S rRNA/L5/L18/L25 subcomplex. Contacts the 5S rRNA and the P site tRNA. Forms a bridge to the 30S subunit in the 70S ribosome.

This is one of the proteins that bind and probably mediate the attachment of the 5S RNA into the large ribosomal subunit, where it forms part of the central protuberance. In the 70S ribosome it contacts protein S13 of the 30S subunit (bridge B1b), connecting the 2 subunits; this bridge is implicated in subunit movement. Contacts the P site tRNA; the 5S rRNA and some of its associated proteins might help stabilize positioning of ribosome-bound tRNAs. The polypeptide is Large ribosomal subunit protein uL5 (Rhizobium leguminosarum bv. trifolii (strain WSM2304)).